We begin with the raw amino-acid sequence, 488 residues long: 3-octaprenyl-4-hydroxybenzoate carboxy-lyase (488 aa).

Residue Asn-172 coordinates Mn(2+). Prenylated FMN contacts are provided by residues 175–177 (IYR), 189–191 (RWL), and 194–195 (RG). Glu-238 is a Mn(2+) binding site. Asp-287 (proton donor) is an active-site residue.

This sequence belongs to the UbiD family. As to quaternary structure, homohexamer. Prenylated FMN serves as cofactor. The cofactor is Mn(2+).

It is found in the cell membrane. It catalyses the reaction a 4-hydroxy-3-(all-trans-polyprenyl)benzoate + H(+) = a 2-(all-trans-polyprenyl)phenol + CO2. It participates in cofactor biosynthesis; ubiquinone biosynthesis. In terms of biological role, catalyzes the decarboxylation of 3-octaprenyl-4-hydroxy benzoate to 2-octaprenylphenol, an intermediate step in ubiquinone biosynthesis. The protein is 3-octaprenyl-4-hydroxybenzoate carboxy-lyase of Hahella chejuensis (strain KCTC 2396).